A 273-amino-acid chain; its full sequence is LDMGHMVNAIAQIDEFVNLGANSIETDVSFDDSANPEYTYHGVPCDCGRTCTKWEYFNEFLKGLRKATTPGDSKYHEKLVLVVFDLKTSSLYDNQASDAGKKLAKSLLQNYWNNGNNGGRAYIVLSIPNLAHYKLITGFKETLTSEGHPELMDKVGYDFSGNDEIGDVAKTYKKAGVTGHVWQSDGITNCLLRGLDRVRKAVANRDSSNGYINKVYYWTVDKRATTRDALDAGVDGIMTNYPDVIADVLNESAYKAKFRIASYDDNPWETFKN.

The active site involves H5. Positions 25 and 27 each coordinate Mg(2+). The Nucleophile role is filled by H41. Cystine bridges form between C45/C51 and C47/C190. D85 is a binding site for Mg(2+). An N-linked (GlcNAc...) asparagine glycan is attached at N250.

This sequence belongs to the arthropod phospholipase D family. Class II subfamily. Mg(2+) is required as a cofactor. In terms of tissue distribution, expressed by the venom gland.

The protein localises to the secreted. It carries out the reaction an N-(acyl)-sphingosylphosphocholine = an N-(acyl)-sphingosyl-1,3-cyclic phosphate + choline. The catalysed reaction is an N-(acyl)-sphingosylphosphoethanolamine = an N-(acyl)-sphingosyl-1,3-cyclic phosphate + ethanolamine. The enzyme catalyses a 1-acyl-sn-glycero-3-phosphocholine = a 1-acyl-sn-glycero-2,3-cyclic phosphate + choline. It catalyses the reaction a 1-acyl-sn-glycero-3-phosphoethanolamine = a 1-acyl-sn-glycero-2,3-cyclic phosphate + ethanolamine. Functionally, dermonecrotic toxins cleave the phosphodiester linkage between the phosphate and headgroup of certain phospholipids (sphingolipid and lysolipid substrates), forming an alcohol (often choline) and a cyclic phosphate. This toxin acts on sphingomyelin (SM). It may also act on ceramide phosphoethanolamine (CPE), lysophosphatidylcholine (LPC) and lysophosphatidylethanolamine (LPE), but not on lysophosphatidylserine (LPS), and lysophosphatidylglycerol (LPG). It acts by transphosphatidylation, releasing exclusively cyclic phosphate products as second products. Induces dermonecrosis, hemolysis, increased vascular permeability, edema, inflammatory response, and platelet aggregation. This Loxosceles deserta (Desert recluse spider) protein is Dermonecrotic toxin LdSicTox-alphaIB1bii.